Consider the following 157-residue polypeptide: NADH-quinone oxidoreductase subunit I (157 aa).

4Fe-4S ferredoxin-type domains lie at 47–78 (YLTK…VKPA) and 94–123 (SDFQ…LSNQ). Cys-58, Cys-61, Cys-64, Cys-68, Cys-103, Cys-106, Cys-109, and Cys-113 together coordinate [4Fe-4S] cluster.

The protein belongs to the complex I 23 kDa subunit family. NDH-1 is composed of 14 different subunits. Subunits NuoA, H, J, K, L, M, N constitute the membrane sector of the complex. [4Fe-4S] cluster serves as cofactor.

The protein localises to the cell inner membrane. The catalysed reaction is a quinone + NADH + 5 H(+)(in) = a quinol + NAD(+) + 4 H(+)(out). In terms of biological role, NDH-1 shuttles electrons from NADH, via FMN and iron-sulfur (Fe-S) centers, to quinones in the respiratory chain. The immediate electron acceptor for the enzyme in this species is believed to be ubiquinone. Couples the redox reaction to proton translocation (for every two electrons transferred, four hydrogen ions are translocated across the cytoplasmic membrane), and thus conserves the redox energy in a proton gradient. The sequence is that of NADH-quinone oxidoreductase subunit I (nuoI) from Protochlamydia amoebophila (strain UWE25).